The sequence spans 467 residues: ATP-dependent protease ATPase subunit HslU (467 aa).

ATP is bound by residues Val20, 62–67 (GVGKTE), Asp280, Glu345, and Arg417.

The protein belongs to the ClpX chaperone family. HslU subfamily. A double ring-shaped homohexamer of HslV is capped on each side by a ring-shaped HslU homohexamer. The assembly of the HslU/HslV complex is dependent on binding of ATP.

The protein resides in the cytoplasm. In terms of biological role, ATPase subunit of a proteasome-like degradation complex; this subunit has chaperone activity. The binding of ATP and its subsequent hydrolysis by HslU are essential for unfolding of protein substrates subsequently hydrolyzed by HslV. HslU recognizes the N-terminal part of its protein substrates and unfolds these before they are guided to HslV for hydrolysis. The sequence is that of ATP-dependent protease ATPase subunit HslU from Enterococcus faecalis (strain ATCC 700802 / V583).